Reading from the N-terminus, the 731-residue chain is Probable G-protein coupled receptor 149 (731 aa).

At 1 to 35 the chain is on the extracellular side; the sequence is MSLFLSNLSTNDSSLWKENHNSTDLLNPPGTLNIY. N-linked (GlcNAc...) asparagine glycans are attached at residues Asn7, Asn11, and Asn21. A helical transmembrane segment spans residues 36 to 56; sequence LFCLTCLMTFAALVGSIYSLI. The Cytoplasmic portion of the chain corresponds to 57 to 69; the sequence is SLLKMQNRTVVSM. Residues 70–90 form a helical membrane-spanning segment; that stretch reads LVASWSVDDLMSVLSVTIFMF. At 91–109 the chain is on the extracellular side; the sequence is LQWPNEVPGYFQFLCTTSA. Cys105 and Cys182 are oxidised to a cystine. A helical transmembrane segment spans residues 110–132; the sequence is LMYLCQGLSSNLKATLLVSYNFY. At 133–155 the chain is on the cytoplasmic side; it reads TMHRGVGSQTASRRSGQVLGVVL. The chain crosses the membrane as a helical span at residues 156-176; sequence TVWAASLLLSALPLCGWGAFV. Residues 177-189 lie on the Extracellular side of the membrane; it reads RTPWGCLVDCSSS. A helical transmembrane segment spans residues 190-210; the sequence is YVLFLSIVYALAFGLLVGLSV. The Cytoplasmic portion of the chain corresponds to 211-310; sequence PLTHRLLCSE…SFTVSVAQKR (100 aa). The interval 234–271 is disordered; it reads RGASIPGTPPTAGRVVSLSPEDAPGPSLRRSGGCSPSS. The chain crosses the membrane as a helical span at residues 311 to 331; it reads FALILALTKVVLWLPMMMHMV. Residues 332–342 are Extracellular-facing; that stretch reads VQNVVGFQSLP. Residues 343–363 traverse the membrane as a helical segment; the sequence is LETFSFLLTLLATTVTPVFVL. The Cytoplasmic portion of the chain corresponds to 364 to 731; it reads SKRWTHLPCG…RKREEESKGS (368 aa). Residues 475–526 are disordered; the sequence is NTDITEAKQDSNNKKDAFSDKTGGDINYEETTFSEGPERRLSHEESQKPDLS. 2 stretches are compositionally biased toward basic and acidic residues: residues 479-497 and 510-526; these read TEAK…DKTG and GPER…PDLS.

It belongs to the G-protein coupled receptor 1 family.

The protein resides in the cell membrane. Orphan receptor. The chain is Probable G-protein coupled receptor 149 (GPR149) from Homo sapiens (Human).